A 264-amino-acid chain; its full sequence is Proliferating cell nuclear antigen (264 aa).

A DNA-binding region spans residues 61 to 80 (RCDRNISMGMNLGNMAKMLK).

It belongs to the PCNA family.

The protein resides in the nucleus. In terms of biological role, this protein is an auxiliary protein of DNA polymerase delta and is involved in the control of eukaryotic DNA replication by increasing the polymerase's processibility during elongation of the leading strand. The sequence is that of Proliferating cell nuclear antigen from Daucus carota (Wild carrot).